The primary structure comprises 305 residues: Mycothiol acetyltransferase (305 aa).

N-acetyltransferase domains follow at residues 10–154 (DRLD…VVLE) and 156–305 (ISLR…YARA). Glu38 provides a ligand contact to 1D-myo-inositol 2-(L-cysteinylamino)-2-deoxy-alpha-D-glucopyranoside. Position 82–84 (82–84 (LAV)) interacts with acetyl-CoA. Residues Glu183, Lys225, and Glu238 each contribute to the 1D-myo-inositol 2-(L-cysteinylamino)-2-deoxy-alpha-D-glucopyranoside site. Acetyl-CoA is bound by residues 242–244 (VAI) and 249–255 (QGRGLGR). 1D-myo-inositol 2-(L-cysteinylamino)-2-deoxy-alpha-D-glucopyranoside is bound at residue Tyr276. Residue 281-286 (NASALH) participates in acetyl-CoA binding.

This sequence belongs to the acetyltransferase family. MshD subfamily. As to quaternary structure, monomer.

The catalysed reaction is 1D-myo-inositol 2-(L-cysteinylamino)-2-deoxy-alpha-D-glucopyranoside + acetyl-CoA = mycothiol + CoA + H(+). Catalyzes the transfer of acetyl from acetyl-CoA to desacetylmycothiol (Cys-GlcN-Ins) to form mycothiol. The chain is Mycothiol acetyltransferase from Rhodococcus opacus (strain B4).